Reading from the N-terminus, the 354-residue chain is MTALKNDRFLRALLKQPVDVTPVWMMRQAGRYLPEYRASRAKAGDFMSLCMNPQFACEVTLQPLDRYPLDAAILFSDILTIPDAMGLGLYFETGEGPRFKKVISTPADIEALPVPDPQKDLGYVMDAVSTIRRELNGRVPLIGFSGSPWTLATYMVEGGSSKDFRKTKAMAYDNPQALHLLLDKLAQSVTSYLNGQILAGAQAVQIFDTWGGNLSAAAYQEFSLAYMRKIVSGLIREHEGRKVPVILFTKNGGLWLESIAEAGADALGLDWTCEIGDARRRVGDKVALQGNMDPTVLYAKPEAIRKEVARILASYGHGTGHVFNLGHGITPEVDPEHAGAFINAVHELSAQYHQ.

Substrate contacts are provided by residues 27-31 (RQAGR), F46, D77, Y154, T209, and H327.

The protein belongs to the uroporphyrinogen decarboxylase family. In terms of assembly, homodimer.

The protein resides in the cytoplasm. The catalysed reaction is uroporphyrinogen III + 4 H(+) = coproporphyrinogen III + 4 CO2. Its pathway is porphyrin-containing compound metabolism; protoporphyrin-IX biosynthesis; coproporphyrinogen-III from 5-aminolevulinate: step 4/4. Functionally, catalyzes the decarboxylation of four acetate groups of uroporphyrinogen-III to yield coproporphyrinogen-III. This is Uroporphyrinogen decarboxylase from Pseudomonas putida (strain ATCC 47054 / DSM 6125 / CFBP 8728 / NCIMB 11950 / KT2440).